Here is a 617-residue protein sequence, read N- to C-terminus: Guanylate cyclase soluble subunit beta-2 (617 aa).

His-26 contacts heme. The region spanning 391–519 (TILFSDVVTF…DTVNTASRME (129 aa)) is the Guanylate cyclase domain. Residues 577 to 586 (RSKTPVDHKG) show a composition bias toward basic and acidic residues. The segment at 577–605 (RSKTPVDHKGSTQKASLPTTKLQGSVQPS) is disordered. The segment covering 588–604 (TQKASLPTTKLQGSVQP) has biased composition (polar residues).

It belongs to the adenylyl cyclase class-4/guanylyl cyclase family. Heterodimer of an alpha and a beta chain. Heme serves as cofactor. As to expression, expressed in gastric signet ring cell carcinoma, but not in the normal stomach.

It is found in the cytoplasm. The catalysed reaction is GTP = 3',5'-cyclic GMP + diphosphate. Its activity is regulated as follows. Activated by nitric oxide in the presence of magnesium or manganese ions. In Homo sapiens (Human), this protein is Guanylate cyclase soluble subunit beta-2 (GUCY1B2).